Here is a 163-residue protein sequence, read N- to C-terminus: Peptide methionine sulfoxide reductase MsrA (163 aa).

Cysteine 10 is a catalytic residue.

It belongs to the MsrA Met sulfoxide reductase family.

It catalyses the reaction L-methionyl-[protein] + [thioredoxin]-disulfide + H2O = L-methionyl-(S)-S-oxide-[protein] + [thioredoxin]-dithiol. The enzyme catalyses [thioredoxin]-disulfide + L-methionine + H2O = L-methionine (S)-S-oxide + [thioredoxin]-dithiol. Has an important function as a repair enzyme for proteins that have been inactivated by oxidation. Catalyzes the reversible oxidation-reduction of methionine sulfoxide in proteins to methionine. This Ruthia magnifica subsp. Calyptogena magnifica protein is Peptide methionine sulfoxide reductase MsrA.